A 150-amino-acid chain; its full sequence is MLLDDLYEIVEPITADLGYILWGIEVVGSGKLTIRIFIDHENGVSVDDCQIVSKEISAVFDVEDPVSGKYILEVSSPGMNRQIFNIIQAQALVGFNVKAVTLAPVGSQTKFKGVLERVEGNNVILNLEDGKEISFDFDELKKLRVSPDFS.

The protein belongs to the RimP family.

It localises to the cytoplasm. Functionally, required for maturation of 30S ribosomal subunits. The chain is Ribosome maturation factor RimP from Francisella tularensis subsp. holarctica (strain LVS).